A 307-amino-acid chain; its full sequence is UDP-3-O-acyl-N-acetylglucosamine deacetylase (307 aa).

3 residues coordinate Zn(2+): His78, His241, and Asp245. His268 acts as the Proton donor in catalysis.

This sequence belongs to the LpxC family. The cofactor is Zn(2+).

It catalyses the reaction a UDP-3-O-[(3R)-3-hydroxyacyl]-N-acetyl-alpha-D-glucosamine + H2O = a UDP-3-O-[(3R)-3-hydroxyacyl]-alpha-D-glucosamine + acetate. It functions in the pathway glycolipid biosynthesis; lipid IV(A) biosynthesis; lipid IV(A) from (3R)-3-hydroxytetradecanoyl-[acyl-carrier-protein] and UDP-N-acetyl-alpha-D-glucosamine: step 2/6. Its function is as follows. Catalyzes the hydrolysis of UDP-3-O-myristoyl-N-acetylglucosamine to form UDP-3-O-myristoylglucosamine and acetate, the committed step in lipid A biosynthesis. This is UDP-3-O-acyl-N-acetylglucosamine deacetylase from Verminephrobacter eiseniae (strain EF01-2).